Reading from the N-terminus, the 1380-residue chain is Protein TORNADO 1 (1380 aa).

LRR repeat units lie at residues 26 to 46 (FFNLQTLSFSSSGNTTHCQLI), 47 to 70 (TESSMNINVTRDNLTSLSQIFIEL), 105 to 132 (TSKIKQLAFRKNRFSEQCLNELSEILKR), 161 to 184 (NDSLEELQIWEDSIGSKGAEELSR), 266 to 289 (NTTVRSLDMTGAKLNSRWAKEFRW), 299 to 322 (EVKLSKTGLKDKAVVYIAAGLFKN), 323 to 346 (KSLQSLYVDGNRFGSVGVEDLLCP), 348 to 371 (SRFSALQLQANITLRSIVFGGSNT), 446 to 472 (INPLIEEIDLARTPLQDSGKADEIYQK), and 476 to 502 (NGRKIDEAETDDSLKDMPLTEPKSVRA). The Roc domain occupies 493–702 (PLTEPKSVRA…HHIRMTSKAI (210 aa)). Residues 506-513 (GQNYAGKT) and 567-571 (NLAGQ) each bind GTP. Residues 574-594 (FFALHDLMFPSPCFFLIVLSL) traverse the membrane as a helical segment. LRR repeat units follow at residues 640–665 (LTHSEKINLQSESFQATVGCIQRLRD), 688–712 (VSKLTHHIRMTSKAILQRVPRVYQL), 799–826 (LTQLIKLDVRKQSTGERNGFVSRKELEK), 1023–1046 (QSQFVSLHRLKEALSSVPAETMYD), 1131–1154 (EAVLQRLKIIEQEIRDLKQEIQGL), and 1229–1254 (QLGCDVMQIDNQAVKCLAPYMTNFMK). 641–644 (THSE) lines the GTP pocket. The COR domain maps to 757–931 (NIQIVETRRH…LQVHLHNRIM (175 aa)). The next 2 helical transmembrane spans lie at 1255 to 1275 (LVTFALRIGANWAAGMGHMIP) and 1287 to 1307 (PAVMTGAAGAAGAIGVAAALG).

As to expression, expressed in seedlings, roots, leaves, stems and flowers. Present in ovules, prominently in nucellus and integuments.

It localises to the membrane. In terms of biological role, involved in the basipetal transport of auxin (IAA) that modulates growth and organs organization. Required for initial divisions in the epidermal/lateral root cap leading to the formation of epidermal cells and a clone of lateral root cap cells, as well as for the maintenance of the radial pattern of cell specification in the root, thus regulating the distinction between the lateral root cap and epidermis. The polypeptide is Protein TORNADO 1 (TRN1) (Arabidopsis thaliana (Mouse-ear cress)).